Reading from the N-terminus, the 604-residue chain is Membrane protein insertase YidC (604 aa).

The chain crosses the membrane as a helical span at residues 8–28 (LYLAIGLSLLVLIGWNYFFAG). The tract at residues 42-84 (EQQAQTQTTSDTTARSDLNVPGQRSLPGESPQTQLSRPEALAA) is disordered. Residues 43–58 (QQAQTQTTSDTTARSD) show a composition bias toward low complexity. Helical transmembrane passes span 349-369 (FDLLIDWGYFYFITRPMFWIL), 375-395 (VVGNFGVAILCITVLVKAVFF), 449-469 (LPMLIQIPVFFALYKVLFVTI), 507-527 (MIGHFLAIGIWPLIMGVSMFF), and 546-566 (WMPVIFTFMLGTFPSGLVIYW).

The protein belongs to the OXA1/ALB3/YidC family. Type 1 subfamily. As to quaternary structure, interacts with the Sec translocase complex via SecD. Specifically interacts with transmembrane segments of nascent integral membrane proteins during membrane integration.

Its subcellular location is the cell inner membrane. Its function is as follows. Required for the insertion and/or proper folding and/or complex formation of integral membrane proteins into the membrane. Involved in integration of membrane proteins that insert both dependently and independently of the Sec translocase complex, as well as at least some lipoproteins. Aids folding of multispanning membrane proteins. In Beijerinckia indica subsp. indica (strain ATCC 9039 / DSM 1715 / NCIMB 8712), this protein is Membrane protein insertase YidC.